Reading from the N-terminus, the 957-residue chain is Glycine dehydrogenase (decarboxylating) (957 aa).

Lysine 708 bears the N6-(pyridoxal phosphate)lysine mark.

It belongs to the GcvP family. In terms of assembly, the glycine cleavage system is composed of four proteins: P, T, L and H. It depends on pyridoxal 5'-phosphate as a cofactor.

The catalysed reaction is N(6)-[(R)-lipoyl]-L-lysyl-[glycine-cleavage complex H protein] + glycine + H(+) = N(6)-[(R)-S(8)-aminomethyldihydrolipoyl]-L-lysyl-[glycine-cleavage complex H protein] + CO2. In terms of biological role, the glycine cleavage system catalyzes the degradation of glycine. The P protein binds the alpha-amino group of glycine through its pyridoxal phosphate cofactor; CO(2) is released and the remaining methylamine moiety is then transferred to the lipoamide cofactor of the H protein. The protein is Glycine dehydrogenase (decarboxylating) of Escherichia coli (strain SE11).